Here is a 275-residue protein sequence, read N- to C-terminus: NH(3)-dependent NAD(+) synthetase (275 aa).

47–54 provides a ligand contact to ATP; the sequence is GISGGQDS. Position 53 (aspartate 53) interacts with Mg(2+). Arginine 141 serves as a coordination point for deamido-NAD(+). Position 161 (threonine 161) interacts with ATP. Glutamate 166 is a Mg(2+) binding site. Deamido-NAD(+)-binding residues include lysine 174 and aspartate 181. 2 residues coordinate ATP: lysine 190 and threonine 212. Deamido-NAD(+) is bound at residue 261-262; that stretch reads HK.

Belongs to the NAD synthetase family. In terms of assembly, homodimer.

It carries out the reaction deamido-NAD(+) + NH4(+) + ATP = AMP + diphosphate + NAD(+) + H(+). Its pathway is cofactor biosynthesis; NAD(+) biosynthesis; NAD(+) from deamido-NAD(+) (ammonia route): step 1/1. Functionally, catalyzes the ATP-dependent amidation of deamido-NAD to form NAD. Uses ammonia as a nitrogen source. This is NH(3)-dependent NAD(+) synthetase from Lactiplantibacillus plantarum (strain ATCC BAA-793 / NCIMB 8826 / WCFS1) (Lactobacillus plantarum).